Reading from the N-terminus, the 132-residue chain is Small ribosomal subunit protein uS9 (132 aa).

This sequence belongs to the universal ribosomal protein uS9 family.

The protein is Small ribosomal subunit protein uS9 of Methanothrix thermoacetophila (strain DSM 6194 / JCM 14653 / NBRC 101360 / PT) (Methanosaeta thermophila).